An 85-amino-acid polypeptide reads, in one-letter code: UPF0291 protein SAK_0343 (85 aa).

The segment at 58–85 (GNDVTPEKLRQVQREKGLHGRSLDDPNS) is disordered. Positions 62–85 (TPEKLRQVQREKGLHGRSLDDPNS) are enriched in basic and acidic residues.

Belongs to the UPF0291 family.

Its subcellular location is the cytoplasm. This chain is UPF0291 protein SAK_0343, found in Streptococcus agalactiae serotype Ia (strain ATCC 27591 / A909 / CDC SS700).